Reading from the N-terminus, the 1099-residue chain is Protein transport protein Sec24A (1099 aa).

Disordered stretches follow at residues 1–36, 65–139, and 279–317; these read MSQPGIPASGGSSTGLQAQNGAASASGSPYTNGPVQ, KTLN…LPGA, and SQPTTKNPTMSRSVGYSYPSLPPGYQNTAPPSTTGAGLP. 5 stretches are compositionally biased toward polar residues: residues 10-20, 68-90, 108-126, 279-292, and 303-317; these read GGSSTGLQAQN, NPVSGQSNSGGSQTVSPLSNYQG, SLHSGPSPQMPLPTSQNPA, SQPTTKNPTMSRSV, and YQNTAPPSTTGAGLP. Residues Cys437, Cys440, Cys458, and Cys461 each contribute to the Zn(2+) site. Residues 437-461 are zinc finger-like; it reads CRSCRTYINPFVSFLDQRRWKCNLC. Residues 972 to 1044 form a Gelsolin-like repeat; sequence PQPPILQLSV…TPESARTIAF (73 aa).

This sequence belongs to the SEC23/SEC24 family. SEC24 subfamily. COPII is composed of at least five proteins: the Sec23/24 complex, the Sec13/31 complex and Sar1. Interacts with TMED2. Interacts (as part of the Sec23/24 complex) with SEC22B; recruits SEC22B into COPII-coated vesicles for its transport from the endoplasmic reticulum to the Golgi. Interacts with STING1; promoting STING1 translocation to COPII vesicles in a STEEP1-dependent manner. Interacts with TMEM39A. Interacts with SACM1L; this interaction is reduced in the absence of TMEM39A. Interacts with kinase FAM20C; transport of FAM20C from the endoplasmic reticulum to the Golgi is likely to be mediated by COPII vesicles.

The protein resides in the cytoplasmic vesicle. Its subcellular location is the COPII-coated vesicle membrane. The protein localises to the endoplasmic reticulum membrane. It is found in the cytoplasm. It localises to the cytosol. Component of the coat protein complex II (COPII) which promotes the formation of transport vesicles from the endoplasmic reticulum (ER). The coat has two main functions, the physical deformation of the endoplasmic reticulum membrane into vesicles and the selection of cargo molecules for their transport to the Golgi complex. Plays a central role in cargo selection within the COPII complex and together with SEC24B may have a different specificity compared to SEC24C and SEC24D. May package preferentially cargos with cytoplasmic DxE or LxxLE motifs and may also recognize conformational epitopes. The protein is Protein transport protein Sec24A of Bos taurus (Bovine).